The following is a 269-amino-acid chain: Photosystem I assembly factor PSA3, chloroplastic (269 aa).

The transit peptide at 1–37 (MGALPVAHSLALTAAFLPCRRPAAHGRCRRRRYRAVV) directs the protein to the chloroplast.

The protein resides in the plastid. It localises to the chloroplast thylakoid membrane. In terms of biological role, nuclear genome-encoded factor required for the accumulation of photosystem I (PSI). Functions as a PSI biogenesis factor. Cooperates with PYG7 to promote the stable assembly of PSI in the thylakoid membrane. May target primarily the PsaC subunit. Does not seem to be required for the expression of chloroplast genes encoding PSI subunits. The polypeptide is Photosystem I assembly factor PSA3, chloroplastic (Zea mays (Maize)).